A 192-amino-acid polypeptide reads, in one-letter code: GTP-binding protein RHO2 (192 aa).

A GTP-binding site is contributed by Gly-14–Thr-21. Residues Tyr-36–Tyr-44 carry the Effector region motif. GTP is bound by residues Asp-61–Gln-65 and Leu-119–Asp-122. The S-palmitoyl cysteine moiety is linked to residue Cys-188. Residue Cys-189 is modified to Cysteine methyl ester. Residue Cys-189 is the site of S-geranylgeranyl cysteine attachment. A propeptide spans Ile-190–Leu-192 (removed in mature form).

Belongs to the small GTPase superfamily. Rho family. Interacts with BEM4.

It localises to the cell membrane. The catalysed reaction is GTP + H2O = GDP + phosphate + H(+). The chain is GTP-binding protein RHO2 (RHO2) from Saccharomyces cerevisiae (strain ATCC 204508 / S288c) (Baker's yeast).